Consider the following 620-residue polypeptide: Probable potassium transport system protein Kup 1 (620 aa).

12 consecutive transmembrane segments (helical) span residues 10–30, 50–70, 102–122, 138–158, 168–188, 211–231, 246–266, 284–304, 336–356, 368–388, 393–413, and 415–435; these read LLISAIGVVYGDIGTSPLYAL, VLSLVFWTVMLLVTVKYVIVI, MLLGVIAAALFYGDSMITPAI, LTPYVVPITAVVLTGLFMIQK, FGPVMCLWFLVLALLGIVNIV, MMSFFALGSIVLAVTGGEALY, WFALVLPALLLNYFGQGALLL, MVVPMVGLATCATVIASQAVI, IYIPFTNWTLYIAVMALVIGF, IAVTGTMMIDTILVAFVMALM, WIAVAAVAGTLLLVDLAFFFA, and IIKVAQGGWFPLFIGVLSFTV.

This sequence belongs to the HAK/KUP transporter (TC 2.A.72) family.

It localises to the cell inner membrane. It carries out the reaction K(+)(in) + H(+)(in) = K(+)(out) + H(+)(out). Functionally, transport of potassium into the cell. Likely operates as a K(+):H(+) symporter. This chain is Probable potassium transport system protein Kup 1, found in Rhodopseudomonas palustris (strain BisB18).